A 419-amino-acid chain; its full sequence is UDP-N-acetylglucosamine 1-carboxyvinyltransferase (419 aa).

22-23 is a binding site for phosphoenolpyruvate; sequence KN. Arg-95 lines the UDP-N-acetyl-alpha-D-glucosamine pocket. The active-site Proton donor is Cys-119. Residue Cys-119 is modified to 2-(S-cysteinyl)pyruvic acid O-phosphothioketal. UDP-N-acetyl-alpha-D-glucosamine is bound by residues 164 to 167, Asp-308, and Ile-330; that span reads KVSV.

The protein belongs to the EPSP synthase family. MurA subfamily.

Its subcellular location is the cytoplasm. It carries out the reaction phosphoenolpyruvate + UDP-N-acetyl-alpha-D-glucosamine = UDP-N-acetyl-3-O-(1-carboxyvinyl)-alpha-D-glucosamine + phosphate. The protein operates within cell wall biogenesis; peptidoglycan biosynthesis. Its function is as follows. Cell wall formation. Adds enolpyruvyl to UDP-N-acetylglucosamine. The protein is UDP-N-acetylglucosamine 1-carboxyvinyltransferase of Rickettsia africae (strain ESF-5).